We begin with the raw amino-acid sequence, 346 residues long: N-acetyl-gamma-glutamyl-phosphate reductase (346 aa).

The active site involves Cys149.

This sequence belongs to the NAGSA dehydrogenase family. Type 1 subfamily.

It localises to the cytoplasm. The catalysed reaction is N-acetyl-L-glutamate 5-semialdehyde + phosphate + NADP(+) = N-acetyl-L-glutamyl 5-phosphate + NADPH + H(+). It participates in amino-acid biosynthesis; L-arginine biosynthesis; N(2)-acetyl-L-ornithine from L-glutamate: step 3/4. Functionally, catalyzes the NADPH-dependent reduction of N-acetyl-5-glutamyl phosphate to yield N-acetyl-L-glutamate 5-semialdehyde. This chain is N-acetyl-gamma-glutamyl-phosphate reductase, found in Geobacter sulfurreducens (strain ATCC 51573 / DSM 12127 / PCA).